The chain runs to 823 residues: Putative ankyrin repeat domain-containing protein 20A4 (823 aa).

ANK repeat units lie at residues 66–95, 99–128, 132–161, 165–194, and 198–227; these read QHRT…QIDV, ENRT…NPNL, YGNT…HIEA, DNNT…SSHA, and LRRS…DVFA. 2 disordered regions span residues 301-343 and 356-405; these read VPEK…EVED and QTLR…NICD. Positions 371-384 are enriched in basic and acidic residues; sequence EQQRHERSEKKQPQ. Coiled-coil stretches lie at residues 431-480, 565-724, and 776-806; these read KKLK…KQLE, EMIT…NNST, and FVLE…KTEV.

The polypeptide is Putative ankyrin repeat domain-containing protein 20A4 (Homo sapiens (Human)).